The sequence spans 840 residues: Heat shock 70 kDa protein 4 (840 aa).

Lys53 is modified (N6-acetyllysine). A Phosphoserine modification is found at Ser76. 2 positions are modified to phosphotyrosine: Tyr89 and Tyr336. 2 positions are modified to phosphoserine: Ser393 and Ser415. The residue at position 430 (Lys430) is an N6-acetyllysine. Residues 506 to 575 are disordered; sequence NEEPMETDQN…QAKKAKVKTS (70 aa). Residues 514 to 533 are compositionally biased toward basic and acidic residues; the sequence is QNAKEEEKMQVDQEEPHAEE. At Thr538 the chain carries Phosphothreonine. Ser546 and Ser647 each carry phosphoserine. A Phosphotyrosine modification is found at Tyr660. N6-acetyllysine is present on Lys679. At Ser756 the chain carries Phosphoserine. Lys773 bears the N6-methyllysine mark. Positions 782–840 are disordered; that stretch reads IISKPKPKVEPPKEEQKNAEQNGPVDGQGDSPGPQAAEQGTDTAVPSDSDKKLPEMDID. Composition is skewed to basic and acidic residues over residues 788–799 and 829–840; these read PKVEPPKEEQKN and DSDKKLPEMDID.

It belongs to the heat shock protein 70 family. In terms of assembly, interacts with TJP1/ZO-1.

It localises to the cytoplasm. The chain is Heat shock 70 kDa protein 4 (HSPA4) from Canis lupus familiaris (Dog).